The following is a 98-amino-acid chain: Integration host factor subunit alpha (98 aa).

The tract at residues Phe-49 to Asp-70 is disordered.

This sequence belongs to the bacterial histone-like protein family. Heterodimer of an alpha and a beta chain.

Its function is as follows. This protein is one of the two subunits of integration host factor, a specific DNA-binding protein that functions in genetic recombination as well as in transcriptional and translational control. In Shewanella baltica (strain OS223), this protein is Integration host factor subunit alpha.